A 419-amino-acid chain; its full sequence is MNVHQGSDGDWSLQPELSCLGDEALAATQEKEGSSLVSSGLHSVTYPLAARSEDLALDYASQPASLPHPHIMPLPEDNKGSCFQSGSKRSHEPFIVPERFGNSGLGFGGGAHSQAPEKVTLLVDGTRFVVNPQIFTAHPDTMLGRMFGPGREYNFTRPNEKGEYVIAEGISATVFRTVLDYYKTGIINCPDGISIPDLRDTCDYLCINFDFNTIRCQDLSALLHELSNDGAHKQFDHYLEELILPIMVGCAKKGERECHIVVLTDEDSVDWDEDHPPPMGEEYSQILYSSKLYRFFKYIENRDVAKTVLKERGLKNIRIGIEGYPTCKEKIKRRPGGRSEVIYNYVQRPFIQMSWEKEEGKSRHVDFQCVRSKSLTNLVAAGEDVLEDQEIIMHHPPQVDELDRLNAPLSQMAPNDFQD.

One can recognise a BTB domain in the interval Glu-117 to Asp-191.

Interacts with AKT1; AKT2 and AKT3. Interacts with PPP2CA and PPP1CA. Part of a complex containing MARK4. Ubiquitously expressed.

It is found in the cytoplasm. Functionally, promotes the phosphorylation of AKT family members. This chain is BTB/POZ domain-containing protein KCTD20 (Kctd20), found in Mus musculus (Mouse).